Here is a 317-residue protein sequence, read N- to C-terminus: Ribosomal RNA large subunit methyltransferase F (317 aa).

This sequence belongs to the methyltransferase superfamily. METTL16/RlmF family.

The protein resides in the cytoplasm. The enzyme catalyses adenosine(1618) in 23S rRNA + S-adenosyl-L-methionine = N(6)-methyladenosine(1618) in 23S rRNA + S-adenosyl-L-homocysteine + H(+). In terms of biological role, specifically methylates the adenine in position 1618 of 23S rRNA. In Pseudomonas putida (strain ATCC 47054 / DSM 6125 / CFBP 8728 / NCIMB 11950 / KT2440), this protein is Ribosomal RNA large subunit methyltransferase F.